The sequence spans 381 residues: Cytochrome b (381 aa).

Transmembrane regions (helical) follow at residues phenylalanine 34–methionine 54, tryptophan 78–isoleucine 99, tryptophan 114–leucine 134, and phenylalanine 179–leucine 199. Residues histidine 84 and histidine 98 each contribute to the heme b site. Histidine 183 and histidine 197 together coordinate heme b. An a ubiquinone-binding site is contributed by histidine 202. The next 4 helical transmembrane spans lie at tyrosine 227–leucine 247, leucine 289–histidine 309, leucine 321–glycine 341, and phenylalanine 348–proline 368.

This sequence belongs to the cytochrome b family. As to quaternary structure, the cytochrome bc1 complex contains 3 respiratory subunits (MT-CYB, CYC1 and UQCRFS1), 2 core proteins (UQCRC1 and UQCRC2) and probably 6 low-molecular weight proteins. It depends on heme b as a cofactor.

It localises to the mitochondrion inner membrane. Functionally, component of the ubiquinol-cytochrome c reductase complex (complex III or cytochrome b-c1 complex) that is part of the mitochondrial respiratory chain. The b-c1 complex mediates electron transfer from ubiquinol to cytochrome c. Contributes to the generation of a proton gradient across the mitochondrial membrane that is then used for ATP synthesis. The protein is Cytochrome b (mt-cyb) of Carcharodon carcharias (Great white shark).